A 653-amino-acid chain; its full sequence is Biotin biosynthesis bifunctional protein BioWF (653 aa).

Residue Arg278 participates in substrate binding. Gly365–Tyr366 serves as a coordination point for pyridoxal 5'-phosphate. His390 is a substrate binding site. Residues Ser436, Asp461–His464, and Thr492–Lys495 contribute to the pyridoxal 5'-phosphate site. Lys495 carries the post-translational modification N6-(pyridoxal phosphate)lysine.

It in the N-terminal section; belongs to the BioW family. In the C-terminal section; belongs to the class-II pyridoxal-phosphate-dependent aminotransferase family. BioF subfamily. In terms of assembly, homodimer. Mg(2+) serves as cofactor. The cofactor is pyridoxal 5'-phosphate.

It carries out the reaction heptanedioate + ATP + CoA = 6-carboxyhexanoyl-CoA + AMP + diphosphate. The enzyme catalyses 6-carboxyhexanoyl-[ACP] + L-alanine + H(+) = (8S)-8-amino-7-oxononanoate + holo-[ACP] + CO2. Its pathway is metabolic intermediate metabolism; pimeloyl-CoA biosynthesis; pimeloyl-CoA from pimelate: step 1/1. It participates in cofactor biosynthesis; biotin biosynthesis. Its function is as follows. Catalyzes both the decarboxylative condensation of pimeloyl-[acyl-carrier protein] and L-alanine to produce 8-amino-7-oxononanoate (AON), [acyl-carrier protein], and carbon dioxide, and the transformation of pimelate into pimeloyl-CoA with concomitant hydrolysis of ATP to AMP. This chain is Biotin biosynthesis bifunctional protein BioWF, found in Cutibacterium acnes (strain DSM 16379 / KPA171202) (Propionibacterium acnes).